The sequence spans 284 residues: Capsid assembly scaffolding protein (284 aa).

Residues Asp19, His48, and Ser107 contribute to the active site. A coiled-coil region spans residues 206–243 (EAVTAVAEHVQEKLSATEQRLAEMETAFSALKQEVTDR). A disordered region spans residues 258-284 (LDHTESLTQQRRSKATGGGGDALMTNC).

The protein belongs to the P2likevirus scaffolding protein family. Homomultimer. Post-translationally, autocleaves itself into an N-terminal fragment containing the protease activity, that remains in the capsid following maturation.

Scaffolding protein and protease involved in the icosahedric procapsid assembly. Coassembles with the capsid proteins to form the procapsid, in which the scaffolding protein is found within the external shell of icosahedrally arranged capsid protein subunits. In a subsequent step the scaffolding protein molecules are cleaved by the viral protease activity. The polypeptide is Capsid assembly scaffolding protein (O) (Enterobacteriaceae (Bacteriophage P2)).